We begin with the raw amino-acid sequence, 268 residues long: GTP cyclohydrolase FolE2 (268 aa).

The protein belongs to the GTP cyclohydrolase IV family.

The catalysed reaction is GTP + H2O = 7,8-dihydroneopterin 3'-triphosphate + formate + H(+). It functions in the pathway cofactor biosynthesis; 7,8-dihydroneopterin triphosphate biosynthesis; 7,8-dihydroneopterin triphosphate from GTP: step 1/1. Functionally, converts GTP to 7,8-dihydroneopterin triphosphate. This Paraburkholderia xenovorans (strain LB400) protein is GTP cyclohydrolase FolE2.